A 485-amino-acid chain; its full sequence is Cobyric acid synthase (485 aa).

Positions 248-435 constitute a GATase cobBQ-type domain; the sequence is VLKVVVPVLP…LHGLFESPDA (188 aa). The Nucleophile role is filled by Cys329. His427 is a catalytic residue.

Belongs to the CobB/CobQ family. CobQ subfamily.

Its pathway is cofactor biosynthesis; adenosylcobalamin biosynthesis. Functionally, catalyzes amidations at positions B, D, E, and G on adenosylcobyrinic A,C-diamide. NH(2) groups are provided by glutamine, and one molecule of ATP is hydrogenolyzed for each amidation. The polypeptide is Cobyric acid synthase (Stutzerimonas stutzeri (strain A1501) (Pseudomonas stutzeri)).